The following is a 401-amino-acid chain: Exodeoxyribonuclease 7 large subunit (401 aa).

This sequence belongs to the XseA family. Heterooligomer composed of large and small subunits.

It is found in the cytoplasm. The catalysed reaction is Exonucleolytic cleavage in either 5'- to 3'- or 3'- to 5'-direction to yield nucleoside 5'-phosphates.. Functionally, bidirectionally degrades single-stranded DNA into large acid-insoluble oligonucleotides, which are then degraded further into small acid-soluble oligonucleotides. This is Exodeoxyribonuclease 7 large subunit from Syntrophotalea carbinolica (strain DSM 2380 / NBRC 103641 / GraBd1) (Pelobacter carbinolicus).